Consider the following 172-residue polypeptide: Transcriptional repressor NrdR (172 aa).

A zinc finger spans residues 3–34 (CPYCRNTDTRVLDSRVADDGGSIRRRRTCSAC). One can recognise an ATP-cone domain in the interval 46–136 (LTVLKRSGAS…VYRAFESADD (91 aa)).

This sequence belongs to the NrdR family. Requires Zn(2+) as cofactor.

Negatively regulates transcription of bacterial ribonucleotide reductase nrd genes and operons by binding to NrdR-boxes. The polypeptide is Transcriptional repressor NrdR (Nocardioides sp. (strain ATCC BAA-499 / JS614)).